The primary structure comprises 202 residues: Holliday junction branch migration complex subunit RuvA (202 aa).

The interval 1–64 is domain I; sequence MIDFLKGRLV…ETALEMFGFS (64 aa). The segment at 65-143 is domain II; sequence SELDRTAFLL…KQQVAVSAEL (79 aa). The segment at 144–152 is flexible linker; the sequence is PASDGVPVL. The domain III stretch occupies residues 152–202; it reads LAGRAENEALAALISLGYTPREAREALNRLPDRKLDAAGLVHAALRIMGSQ.

The protein belongs to the RuvA family. Homotetramer. Forms an RuvA(8)-RuvB(12)-Holliday junction (HJ) complex. HJ DNA is sandwiched between 2 RuvA tetramers; dsDNA enters through RuvA and exits via RuvB. An RuvB hexamer assembles on each DNA strand where it exits the tetramer. Each RuvB hexamer is contacted by two RuvA subunits (via domain III) on 2 adjacent RuvB subunits; this complex drives branch migration. In the full resolvosome a probable DNA-RuvA(4)-RuvB(12)-RuvC(2) complex forms which resolves the HJ.

The protein resides in the cytoplasm. The RuvA-RuvB-RuvC complex processes Holliday junction (HJ) DNA during genetic recombination and DNA repair, while the RuvA-RuvB complex plays an important role in the rescue of blocked DNA replication forks via replication fork reversal (RFR). RuvA specifically binds to HJ cruciform DNA, conferring on it an open structure. The RuvB hexamer acts as an ATP-dependent pump, pulling dsDNA into and through the RuvAB complex. HJ branch migration allows RuvC to scan DNA until it finds its consensus sequence, where it cleaves and resolves the cruciform DNA. This is Holliday junction branch migration complex subunit RuvA from Desulforudis audaxviator (strain MP104C).